The sequence spans 193 residues: Ion-translocating oxidoreductase complex subunit A (193 aa).

6 helical membrane passes run 5–25 (LLLL…FLGL), 39–59 (IGMS…SYLV), 72–92 (LTTM…EMVV), 102–122 (LLGI…VALL), 134–154 (IIYG…FSAM), and 171–191 (AIAM…TGLV).

This sequence belongs to the NqrDE/RnfAE family. The complex is composed of six subunits: RnfA, RnfB, RnfC, RnfD, RnfE and RnfG.

It is found in the cell inner membrane. Functionally, part of a membrane-bound complex that couples electron transfer with translocation of ions across the membrane. The chain is Ion-translocating oxidoreductase complex subunit A from Colwellia psychrerythraea (strain 34H / ATCC BAA-681) (Vibrio psychroerythus).